The chain runs to 230 residues: 6-carboxyhexanoate--CoA ligase (230 aa).

The protein belongs to the BioW family. As to quaternary structure, homodimer. Mg(2+) serves as cofactor.

It carries out the reaction heptanedioate + ATP + CoA = 6-carboxyhexanoyl-CoA + AMP + diphosphate. The protein operates within metabolic intermediate metabolism; pimeloyl-CoA biosynthesis; pimeloyl-CoA from pimelate: step 1/1. In terms of biological role, catalyzes the transformation of pimelate into pimeloyl-CoA with concomitant hydrolysis of ATP to AMP. In Staphylococcus aureus (strain MRSA252), this protein is 6-carboxyhexanoate--CoA ligase.